A 419-amino-acid chain; its full sequence is L-rhamnose isomerase (419 aa).

3 residues coordinate Mn(2+): His262, Asp294, and Asp296.

Belongs to the rhamnose isomerase family. In terms of assembly, homotetramer. Mn(2+) serves as cofactor.

It localises to the cytoplasm. The catalysed reaction is L-rhamnopyranose = L-rhamnulose. It functions in the pathway carbohydrate degradation; L-rhamnose degradation; glycerone phosphate from L-rhamnose: step 1/3. Functionally, catalyzes the interconversion of L-rhamnose and L-rhamnulose. The protein is L-rhamnose isomerase of Klebsiella pneumoniae subsp. pneumoniae (strain ATCC 700721 / MGH 78578).